We begin with the raw amino-acid sequence, 218 residues long: MDKSESTSAGRNRRRRPRRGSRSAPSSSDANFRVLSQQLSRLNKTLAAGRPTINHPTFVGSERCKPGYTFTSITLKPPKIDRGSYYGKRLLLPDSVMEYDKKLVSRIQIRVNPLPKFDSTVWVTVRKVPASSDLSVAAISAMFADGASPVLVYQYAASGVQANNKLLYDLSAMRADIGDMRKYAVLVYSKDDALETDELVLHVDVEHQRIPTSGVLPV.

Position 1 is an N-acetylmethionine; by host (M1). The disordered stretch occupies residues 1 to 30 (MDKSESTSAGRNRRRRPRRGSRSAPSSSDA). A compositionally biased stretch (basic residues) spans 11 to 21 (RNRRRRPRRGS).

This sequence belongs to the cucumovirus capsid protein family.

The protein localises to the virion. Functionally, capsid protein. Probably binds RNA and plays a role in packaging. The sequence is that of Capsid protein from Cucumis sativus (Cucumber).